The sequence spans 175 residues: Co-chaperone protein HscB homolog (175 aa).

The region spanning 7–79 (SHFDLFHLPA…LKRASYLLSL (73 aa)) is the J domain.

Belongs to the HscB family. Interacts with HscA and stimulates its ATPase activity.

Co-chaperone involved in the maturation of iron-sulfur cluster-containing proteins. Seems to help targeting proteins to be folded toward HscA. This Burkholderia cenocepacia (strain ATCC BAA-245 / DSM 16553 / LMG 16656 / NCTC 13227 / J2315 / CF5610) (Burkholderia cepacia (strain J2315)) protein is Co-chaperone protein HscB homolog.